We begin with the raw amino-acid sequence, 116 residues long: Large ribosomal subunit protein bL19 (116 aa).

It belongs to the bacterial ribosomal protein bL19 family.

This protein is located at the 30S-50S ribosomal subunit interface and may play a role in the structure and function of the aminoacyl-tRNA binding site. In Syntrophomonas wolfei subsp. wolfei (strain DSM 2245B / Goettingen), this protein is Large ribosomal subunit protein bL19.